We begin with the raw amino-acid sequence, 196 residues long: MYDYIKGTLVKITAKHIVIETNGLGYIVTVANPYSFSDQMNQTIQVYLHQVIRDDAHLLFGFHTEDEKEVFLKLISVSGIGPTTALAIVAVDDNQGLVAAIDNSDIKYLMKFPKIGKKTAQQMVLDLAGKFAELPAETTNTTANQTAGNQQLDEAMEALLALGYKATELKKVKAFFEDTNETAEQYIKSALKMLMK.

Residues 1–63 are domain I; the sequence is MYDYIKGTLV…DDAHLLFGFH (63 aa). Residues 64 to 142 are domain II; it reads TEDEKEVFLK…ELPAETTNTT (79 aa). The interval 143-146 is flexible linker; the sequence is ANQT. The tract at residues 147-196 is domain III; the sequence is AGNQQLDEAMEALLALGYKATELKKVKAFFEDTNETAEQYIKSALKMLMK.

It belongs to the RuvA family. Homotetramer. Forms an RuvA(8)-RuvB(12)-Holliday junction (HJ) complex. HJ DNA is sandwiched between 2 RuvA tetramers; dsDNA enters through RuvA and exits via RuvB. An RuvB hexamer assembles on each DNA strand where it exits the tetramer. Each RuvB hexamer is contacted by two RuvA subunits (via domain III) on 2 adjacent RuvB subunits; this complex drives branch migration. In the full resolvosome a probable DNA-RuvA(4)-RuvB(12)-RuvC(2) complex forms which resolves the HJ.

It is found in the cytoplasm. In terms of biological role, the RuvA-RuvB-RuvC complex processes Holliday junction (HJ) DNA during genetic recombination and DNA repair, while the RuvA-RuvB complex plays an important role in the rescue of blocked DNA replication forks via replication fork reversal (RFR). RuvA specifically binds to HJ cruciform DNA, conferring on it an open structure. The RuvB hexamer acts as an ATP-dependent pump, pulling dsDNA into and through the RuvAB complex. HJ branch migration allows RuvC to scan DNA until it finds its consensus sequence, where it cleaves and resolves the cruciform DNA. The polypeptide is Holliday junction branch migration complex subunit RuvA (Streptococcus thermophilus (strain ATCC BAA-491 / LMD-9)).